Reading from the N-terminus, the 154-residue chain is Myoglobin (154 aa).

A Globin domain is found at 2-148; the sequence is GLSDEEWKKV…FRNDMASRYK (147 aa). Residue His65 coordinates nitrite. An O2-binding site is contributed by His65. Residue His94 participates in heme b binding.

This sequence belongs to the globin family. As to quaternary structure, monomeric.

The protein resides in the cytoplasm. It is found in the sarcoplasm. The enzyme catalyses Fe(III)-heme b-[protein] + nitric oxide + H2O = Fe(II)-heme b-[protein] + nitrite + 2 H(+). It carries out the reaction H2O2 + AH2 = A + 2 H2O. In terms of biological role, monomeric heme protein which primary function is to store oxygen and facilitate its diffusion within muscle tissues. Reversibly binds oxygen through a pentacoordinated heme iron and enables its timely and efficient release as needed during periods of heightened demand. Depending on the oxidative conditions of tissues and cells, and in addition to its ability to bind oxygen, it also has a nitrite reductase activity whereby it regulates the production of bioactive nitric oxide. Under stress conditions, like hypoxia and anoxia, it also protects cells against reactive oxygen species thanks to its pseudoperoxidase activity. The chain is Myoglobin (MB) from Varanus varius (Lace monitor lizard).